The chain runs to 70 residues: U-scoloptoxin(04)-Er3a (70 aa).

The N-terminal stretch at 1 to 24 (MAAIRNLLILTMLLIVCVSWNADA) is a signal peptide.

Belongs to the scoloptoxin-04 family. In terms of processing, contains 2 disulfide bonds. In terms of tissue distribution, expressed by the venom gland.

It localises to the secreted. In Ethmostigmus rubripes (Giant centipede), this protein is U-scoloptoxin(04)-Er3a.